Here is a 217-residue protein sequence, read N- to C-terminus: Large ribosomal subunit protein uL3 (217 aa).

The segment at 129–161 is disordered; sequence SRGPMSHGSKNHRAPGSTGAGTTPGRIYPGKRM. The segment covering 142-153 has biased composition (low complexity); sequence APGSTGAGTTPG.

It belongs to the universal ribosomal protein uL3 family. As to quaternary structure, part of the 50S ribosomal subunit. Forms a cluster with proteins L14 and L19.

Its function is as follows. One of the primary rRNA binding proteins, it binds directly near the 3'-end of the 23S rRNA, where it nucleates assembly of the 50S subunit. This chain is Large ribosomal subunit protein uL3, found in Prochlorococcus marinus subsp. pastoris (strain CCMP1986 / NIES-2087 / MED4).